Reading from the N-terminus, the 454-residue chain is Bifunctional protein GlmU (454 aa).

The pyrophosphorylase stretch occupies residues 1–231 (MSRPTVSLIV…EAETLGVNTR (231 aa)). UDP-N-acetyl-alpha-D-glucosamine is bound by residues 11–14 (LAAG), Lys25, Gln78, 83–84 (GT), 106–108 (YGD), Gly143, Glu157, Asn172, and Asn229. Mg(2+) is bound at residue Asp108. Mg(2+) is bound at residue Asn229. The segment at 232 to 252 (AQLAAAEAEFQRRARAAALED) is linker. Residues 253–454 (GVTLTAPDTV…ARDASKKGTN (202 aa)) form an N-acetyltransferase region. Residues Arg318 and Lys336 each contribute to the UDP-N-acetyl-alpha-D-glucosamine site. His348 (proton acceptor) is an active-site residue. Residues Tyr351 and Asn362 each contribute to the UDP-N-acetyl-alpha-D-glucosamine site. Acetyl-CoA-binding positions include Ala365, 371–372 (NY), Ser390, Ser408, and Arg425.

It in the N-terminal section; belongs to the N-acetylglucosamine-1-phosphate uridyltransferase family. This sequence in the C-terminal section; belongs to the transferase hexapeptide repeat family. Homotrimer. It depends on Mg(2+) as a cofactor.

It is found in the cytoplasm. It carries out the reaction alpha-D-glucosamine 1-phosphate + acetyl-CoA = N-acetyl-alpha-D-glucosamine 1-phosphate + CoA + H(+). It catalyses the reaction N-acetyl-alpha-D-glucosamine 1-phosphate + UTP + H(+) = UDP-N-acetyl-alpha-D-glucosamine + diphosphate. It functions in the pathway nucleotide-sugar biosynthesis; UDP-N-acetyl-alpha-D-glucosamine biosynthesis; N-acetyl-alpha-D-glucosamine 1-phosphate from alpha-D-glucosamine 6-phosphate (route II): step 2/2. The protein operates within nucleotide-sugar biosynthesis; UDP-N-acetyl-alpha-D-glucosamine biosynthesis; UDP-N-acetyl-alpha-D-glucosamine from N-acetyl-alpha-D-glucosamine 1-phosphate: step 1/1. It participates in bacterial outer membrane biogenesis; LPS lipid A biosynthesis. Catalyzes the last two sequential reactions in the de novo biosynthetic pathway for UDP-N-acetylglucosamine (UDP-GlcNAc). The C-terminal domain catalyzes the transfer of acetyl group from acetyl coenzyme A to glucosamine-1-phosphate (GlcN-1-P) to produce N-acetylglucosamine-1-phosphate (GlcNAc-1-P), which is converted into UDP-GlcNAc by the transfer of uridine 5-monophosphate (from uridine 5-triphosphate), a reaction catalyzed by the N-terminal domain. The chain is Bifunctional protein GlmU from Cereibacter sphaeroides (strain ATCC 17025 / ATH 2.4.3) (Rhodobacter sphaeroides).